We begin with the raw amino-acid sequence, 278 residues long: MHYLPVAIVTGATRGIGKAICQKLFQKGLSCIILGSTKESIERTAIDRGQLQSGLSYQRQCAIAIDFKKWPHWLDYESYDGIEYFKDRPPLKQKYSTLFDPCNKWSNNERRYYVNLLINCAGLTQESLSVRTTASQIQDIMNVNFMSPVTMTNICIKYMMKSQRRWPELSGQSARPTIVNISSILHSGKMKVPGTSVYSASKAALSRFTEVLAAEMEPRNIRCFTISPGLVKGTDMIQNLPVEAKEMLERTIGASGTSAPAEIAEEVWSLYSRTALET.

T13, R14, I16, S36, S40, T44, D66, F67, E77, G122, Q125, and E126 together coordinate NADP(+). The active-site Proton donor is the S182. 4 residues coordinate NADP(+): Y198, K202, L230, and V231. Catalysis depends on Y198, which acts as the Proton acceptor. K202 (lowers pKa of active site Tyr) is an active-site residue.

Belongs to the short-chain dehydrogenases/reductases (SDR) family.

The protein resides in the mitochondrion. It carries out the reaction a (3R)-hydroxyacyl-[ACP] + NADP(+) = a 3-oxoacyl-[ACP] + NADPH + H(+). Its pathway is lipid metabolism; fatty acid biosynthesis. Its function is as follows. Involved in biosynthesis of fatty acids in mitochondria. This Saccharomyces cerevisiae (strain ATCC 204508 / S288c) (Baker's yeast) protein is 3-oxoacyl-[acyl-carrier-protein] reductase (OAR1).